A 271-amino-acid chain; its full sequence is N-acetyltransferase ECO1 (271 aa).

The segment at 26–50 (VKCPKCSITYSTNSPSDLVQHKRYH) adopts a CCHH-type zinc-finger fold. The 163-residue stretch at 109 to 271 (VMISPKKANE…SGKLLIPCYI (163 aa)) folds into the N-acetyltransferase domain.

This sequence belongs to the acetyltransferase family. ECO subfamily.

Its subcellular location is the nucleus. Probable acetyltransferase required for the establishment of sister chromatid cohesion and couple the processes of cohesion and DNA replication to ensure that only sister chromatids become paired together. In contrast to the structural cohesins, the deposition and establishment factors are required only during S phase. Acts by acetylating the cohesin complex component SMC3. The chain is N-acetyltransferase ECO1 (ECO1) from Kluyveromyces lactis (strain ATCC 8585 / CBS 2359 / DSM 70799 / NBRC 1267 / NRRL Y-1140 / WM37) (Yeast).